The sequence spans 314 residues: Ferredoxin:CoB-CoM heterodisulfide reductase subunit B (314 aa).

The protein belongs to the HdrB family. As to quaternary structure, the ferredoxin:CoB-CoM heterodisulfide reductase is composed of three subunits; HdrA1, HdrB1 and HdrC1. The cofactor is [4Fe-4S] cluster.

It localises to the cytoplasm. It catalyses the reaction coenzyme B + coenzyme M + 2 oxidized [2Fe-2S]-[ferredoxin] = coenzyme M-coenzyme B heterodisulfide + 2 reduced [2Fe-2S]-[ferredoxin] + 2 H(+). The protein operates within cofactor metabolism; coenzyme M-coenzyme B heterodisulfide reduction; coenzyme B and coenzyme M from coenzyme M-coenzyme B heterodisulfide: step 1/1. Functionally, part of a complex that catalyzes the reversible reduction of CoM-S-S-CoB to the thiol-coenzymes H-S-CoM (coenzyme M) and H-S-CoB (coenzyme B). Probably involved in methylotrophic methanogenesis but not in aceticlastic methanogenesis. The protein is Ferredoxin:CoB-CoM heterodisulfide reductase subunit B of Methanosarcina acetivorans (strain ATCC 35395 / DSM 2834 / JCM 12185 / C2A).